Reading from the N-terminus, the 531-residue chain is Fatty acid--[acyl-carrier-protein] ligase MmaC (531 aa).

Residue threonine 169 participates in Mg(2+) binding. ATP is bound by residues isoleucine 218, valine 308, and serine 312. Glutamate 313 contacts Mg(2+). Aspartate 403 is a binding site for ATP.

The protein belongs to the ATP-dependent AMP-binding enzyme family. Mg(2+) is required as a cofactor.

The enzyme catalyses a (2E)-enoyl fatty acid + holo-[ACP] + ATP = a (2E)-enoyl-[ACP] + AMP + diphosphate. The catalysed reaction is a (2E)-enoyl fatty acid + ATP + H(+) = a (2E)-2-fatty-enoyl-AMP + diphosphate. It carries out the reaction a (2E)-2-fatty-enoyl-AMP + holo-[ACP] = a (2E)-enoyl-[ACP] + AMP + H(+). It catalyses the reaction (2E)-decenoate + holo-[ACP] + ATP = (2E)-decenoyl-[ACP] + AMP + diphosphate. The enzyme catalyses a (3R)-3-isocyanyl-fatty acid + holo-[ACP] + ATP = a (3R)-3-isocyanyl-fatty acyl-[ACP] + AMP + diphosphate. The catalysed reaction is a (3R)-3-isocyanyl-fatty acid + ATP + H(+) = a (3R)-3-isocyanyl-fatty acyl-AMP + diphosphate. It carries out the reaction a (3R)-3-isocyanyl-fatty acyl-AMP + holo-[ACP] = a (3R)-3-isocyanyl-fatty acyl-[ACP] + AMP + H(+). Acyl:acyl-carrier protein ligase involved in the biosynthesis of a unique class of isonitrile lipopeptides (INLPs) that seem to play a role in metal acquisition in M.marinum. Acts twice during the INLP pathway, catalyzing the activation of (2E)-2-decenoate as well as probably the corresponding (3R)-3-isocyanyl-fatty acid as acyl-adenylates (acyl-AMP), and then the acyl transfer to the dedicated acyl-carrier protein MmaB. The protein is Fatty acid--[acyl-carrier-protein] ligase MmaC of Mycobacterium marinum (strain ATCC BAA-535 / M).